We begin with the raw amino-acid sequence, 468 residues long: Glutamate--tRNA ligase (468 aa).

Residues 11-21 (PSPTGFIHLGN) carry the 'HIGH' region motif. The 'KMSKS' region signature appears at 243-247 (KMSKR). Lys246 contributes to the ATP binding site.

This sequence belongs to the class-I aminoacyl-tRNA synthetase family. Glutamate--tRNA ligase type 1 subfamily. As to quaternary structure, monomer.

It is found in the cytoplasm. The enzyme catalyses tRNA(Glu) + L-glutamate + ATP = L-glutamyl-tRNA(Glu) + AMP + diphosphate. Functionally, catalyzes the attachment of glutamate to tRNA(Glu) in a two-step reaction: glutamate is first activated by ATP to form Glu-AMP and then transferred to the acceptor end of tRNA(Glu). The chain is Glutamate--tRNA ligase from Cupriavidus pinatubonensis (strain JMP 134 / LMG 1197) (Cupriavidus necator (strain JMP 134)).